A 131-amino-acid polypeptide reads, in one-letter code: MRHYEIVFMVHPDQSEQVPGMIERYTAAITGAEGKIHRLEDWGRRQLAYPINKLHKAHYVLMNVEAPQEVIDELETTFRFNDAVIRSMVMRTKHAVTEASPMVKAKDERRERRDDFANETADDAEAGDSEE.

K93 carries the N6-acetyllysine modification. Positions E98–E131 are disordered. Residues K104–F116 show a composition bias toward basic and acidic residues. Positions T120–E131 are enriched in acidic residues.

The protein belongs to the bacterial ribosomal protein bS6 family.

Binds together with bS18 to 16S ribosomal RNA. In Escherichia fergusonii (strain ATCC 35469 / DSM 13698 / CCUG 18766 / IAM 14443 / JCM 21226 / LMG 7866 / NBRC 102419 / NCTC 12128 / CDC 0568-73), this protein is Small ribosomal subunit protein bS6.